The chain runs to 125 residues: Oxytocin-neurophysin 1 (125 aa).

A signal peptide spans 1–19; it reads MAGSSLACCLLGLLALTSA. A disulfide bridge connects residues cysteine 20 and cysteine 25. A Glycine amide modification is found at glycine 28. 7 disulfides stabilise this stretch: cysteine 41–cysteine 85, cysteine 44–cysteine 58, cysteine 52–cysteine 75, cysteine 59–cysteine 65, cysteine 92–cysteine 104, cysteine 98–cysteine 116, and cysteine 105–cysteine 110.

Belongs to the vasopressin/oxytocin family. Interacts with oxytocin receptor (Ki=1.5 nM). Interacts with vasopressin V1aR/AVPR1A (Ki=37 nM), V1bR/AVPR1B (Ki=222 nM), and V2R/AVPR2 receptors (Ki=823 nM).

Its function is as follows. Neurophysin 1 specifically binds oxytocin. Functionally, oxytocin causes contraction of the smooth muscle of the uterus and of the mammary gland. Acts by binding to oxytocin receptor (OXTR). The sequence is that of Oxytocin-neurophysin 1 (OXT) from Ovis aries (Sheep).